The sequence spans 946 residues: MKPLSSPLQQYWQTVVERLPEPLAEESLSAQAKSVLTFSDFVQDSVIAHPEWLTELESQPPQADEWQHYASWLQEALSNVSDEAGLMRELRLFRRRIMVRIAWAQTLALVTEESILQQLSHLAETLIVAARDWLYDACCREWGTPCNAQGEAQPLLILGMGKLGGGELNFSSDIDLIFAWPEHGCTQGGRRELDNAQFFTRMGQRLIKVLDQPTQDGFVYRVDMRLRPFGESGPLVLSFAALEDYYQEQGRDWERYAMVKARIMGDSDGVYANELRAMLRPFVFRRYIDFSVIQSLRNMKGMIAREVRRRGLTDNIKLGAGGIREIEFIVQVFQLIRGGREPSLQSRALLPTLSAIAALHLLSENDAEQLRVAYLFLRRLENLLQSINDEQTQTLPFDELNRARLAWAMDFADWPQLTGVLTAHMANVRRVFNELIGDDESETQEESLSEQWRELWQDALQEDDTTPVLAHLSEDDRKQVLMLIADFRKELDKRTIGPRGRQVLDHLMPHLLSDVCAREDAAVTLSRITALLVGIVTRTTYLELLSEFPAALKHLISLCAASPMIASQLARYPLLLDELLDPNTLYQPTATDAYRDELRQYLLRVPEDDEEQQLEALRQFKQAQLLRIAAADIAGTLPVMKVSDHLTWLAEAMIDAVVQQAWVQMVARYGKPNHLNEREGRGFAVVGYGKLGGWELGYSSDLDLIFLHDCPMDAMTDGEREIDGRQFYLRLAQRIMHLFSTRTSSGILYEVDARLRPSGAAGMLVTSAEAFADYQKNEAWTWEHQALVRARVVYGDPQLTAHFDAVRREIMTLPREGKTLQTEVREMREKMRAHLGNKHRDRFDIKADEGGITDIEFITQYLVLRYAHEKPKLTRWSDNVRILELLAQNDIMEEQEAMALTRAYTTLRDELHHLALQELPGHVSEDCFTAERELVRASWQKWLVEE.

The segment at methionine 1–glutamate 440 is adenylyl removase. The tract at residues serine 449–glutamate 946 is adenylyl transferase.

The protein belongs to the GlnE family. Mg(2+) is required as a cofactor.

It catalyses the reaction [glutamine synthetase]-O(4)-(5'-adenylyl)-L-tyrosine + phosphate = [glutamine synthetase]-L-tyrosine + ADP. It carries out the reaction [glutamine synthetase]-L-tyrosine + ATP = [glutamine synthetase]-O(4)-(5'-adenylyl)-L-tyrosine + diphosphate. In terms of biological role, involved in the regulation of glutamine synthetase GlnA, a key enzyme in the process to assimilate ammonia. When cellular nitrogen levels are high, the C-terminal adenylyl transferase (AT) inactivates GlnA by covalent transfer of an adenylyl group from ATP to specific tyrosine residue of GlnA, thus reducing its activity. Conversely, when nitrogen levels are low, the N-terminal adenylyl removase (AR) activates GlnA by removing the adenylyl group by phosphorolysis, increasing its activity. The regulatory region of GlnE binds the signal transduction protein PII (GlnB) which indicates the nitrogen status of the cell. The sequence is that of Bifunctional glutamine synthetase adenylyltransferase/adenylyl-removing enzyme from Escherichia coli O6:H1 (strain CFT073 / ATCC 700928 / UPEC).